The chain runs to 428 residues: 3-phosphoshikimate 1-carboxyvinyltransferase (428 aa).

The 3-phosphoshikimate site is built by lysine 21, serine 22, and arginine 26. Lysine 21 contributes to the phosphoenolpyruvate binding site. Residues glycine 92 and arginine 120 each contribute to the phosphoenolpyruvate site. Residues serine 165, glutamine 167, aspartate 313, and lysine 340 each contribute to the 3-phosphoshikimate site. Glutamine 167 lines the phosphoenolpyruvate pocket. Catalysis depends on aspartate 313, which acts as the Proton acceptor. Phosphoenolpyruvate contacts are provided by arginine 344 and arginine 386.

It belongs to the EPSP synthase family. As to quaternary structure, monomer.

The protein resides in the cytoplasm. The catalysed reaction is 3-phosphoshikimate + phosphoenolpyruvate = 5-O-(1-carboxyvinyl)-3-phosphoshikimate + phosphate. The protein operates within metabolic intermediate biosynthesis; chorismate biosynthesis; chorismate from D-erythrose 4-phosphate and phosphoenolpyruvate: step 6/7. In terms of biological role, catalyzes the transfer of the enolpyruvyl moiety of phosphoenolpyruvate (PEP) to the 5-hydroxyl of shikimate-3-phosphate (S3P) to produce enolpyruvyl shikimate-3-phosphate and inorganic phosphate. In Carboxydothermus hydrogenoformans (strain ATCC BAA-161 / DSM 6008 / Z-2901), this protein is 3-phosphoshikimate 1-carboxyvinyltransferase.